A 311-amino-acid polypeptide reads, in one-letter code: Aspartate carbamoyltransferase catalytic subunit (311 aa).

Residues R55 and T56 each coordinate carbamoyl phosphate. K85 serves as a coordination point for L-aspartate. Carbamoyl phosphate-binding residues include R106, H135, and Q138. Residues R168 and R230 each contribute to the L-aspartate site. Residues L268 and P269 each contribute to the carbamoyl phosphate site.

The protein belongs to the aspartate/ornithine carbamoyltransferase superfamily. ATCase family. Heterododecamer (2C3:3R2) of six catalytic PyrB chains organized as two trimers (C3), and six regulatory PyrI chains organized as three dimers (R2).

It catalyses the reaction carbamoyl phosphate + L-aspartate = N-carbamoyl-L-aspartate + phosphate + H(+). It functions in the pathway pyrimidine metabolism; UMP biosynthesis via de novo pathway; (S)-dihydroorotate from bicarbonate: step 2/3. Catalyzes the condensation of carbamoyl phosphate and aspartate to form carbamoyl aspartate and inorganic phosphate, the committed step in the de novo pyrimidine nucleotide biosynthesis pathway. The polypeptide is Aspartate carbamoyltransferase catalytic subunit (Pectobacterium carotovorum subsp. carotovorum (strain PC1)).